The sequence spans 308 residues: Glycine--tRNA ligase alpha subunit (308 aa).

Belongs to the class-II aminoacyl-tRNA synthetase family. In terms of assembly, tetramer of two alpha and two beta subunits.

The protein resides in the cytoplasm. The catalysed reaction is tRNA(Gly) + glycine + ATP = glycyl-tRNA(Gly) + AMP + diphosphate. This chain is Glycine--tRNA ligase alpha subunit, found in Brucella abortus (strain 2308).